A 171-amino-acid chain; its full sequence is 3-hydroxydecanoyl-[acyl-carrier-protein] dehydratase (171 aa).

His-71 is an active-site residue.

It belongs to the thioester dehydratase family. FabA subfamily. Homodimer.

It is found in the cytoplasm. The enzyme catalyses a (3R)-hydroxyacyl-[ACP] = a (2E)-enoyl-[ACP] + H2O. It catalyses the reaction (3R)-hydroxydecanoyl-[ACP] = (2E)-decenoyl-[ACP] + H2O. The catalysed reaction is (2E)-decenoyl-[ACP] = (3Z)-decenoyl-[ACP]. It functions in the pathway lipid metabolism; fatty acid biosynthesis. In terms of biological role, necessary for the introduction of cis unsaturation into fatty acids. Catalyzes the dehydration of (3R)-3-hydroxydecanoyl-ACP to E-(2)-decenoyl-ACP and then its isomerization to Z-(3)-decenoyl-ACP. Can catalyze the dehydratase reaction for beta-hydroxyacyl-ACPs with saturated chain lengths up to 16:0, being most active on intermediate chain length. The polypeptide is 3-hydroxydecanoyl-[acyl-carrier-protein] dehydratase (Rhizobium rhizogenes (strain K84 / ATCC BAA-868) (Agrobacterium radiobacter)).